The sequence spans 310 residues: tRNA dimethylallyltransferase (310 aa).

Residue 24–31 (GPTASGKT) coordinates ATP. 26–31 (TASGKT) lines the substrate pocket. The interaction with substrate tRNA stretch occupies residues 49–52 (DSRQ).

This sequence belongs to the IPP transferase family. Monomer. Mg(2+) serves as cofactor.

It catalyses the reaction adenosine(37) in tRNA + dimethylallyl diphosphate = N(6)-dimethylallyladenosine(37) in tRNA + diphosphate. Catalyzes the transfer of a dimethylallyl group onto the adenine at position 37 in tRNAs that read codons beginning with uridine, leading to the formation of N6-(dimethylallyl)adenosine (i(6)A). The chain is tRNA dimethylallyltransferase from Synechococcus sp. (strain WH7803).